We begin with the raw amino-acid sequence, 620 residues long: 1-deoxy-D-xylulose-5-phosphate synthase (620 aa).

Residues histidine 80 and 121 to 123 (GHS) contribute to the thiamine diphosphate site. Aspartate 152 contributes to the Mg(2+) binding site. Thiamine diphosphate is bound by residues 153–154 (GA), asparagine 181, tyrosine 288, and glutamate 370. Asparagine 181 contributes to the Mg(2+) binding site.

It belongs to the transketolase family. DXPS subfamily. As to quaternary structure, homodimer. It depends on Mg(2+) as a cofactor. Thiamine diphosphate is required as a cofactor.

It catalyses the reaction D-glyceraldehyde 3-phosphate + pyruvate + H(+) = 1-deoxy-D-xylulose 5-phosphate + CO2. The protein operates within metabolic intermediate biosynthesis; 1-deoxy-D-xylulose 5-phosphate biosynthesis; 1-deoxy-D-xylulose 5-phosphate from D-glyceraldehyde 3-phosphate and pyruvate: step 1/1. In terms of biological role, catalyzes the acyloin condensation reaction between C atoms 2 and 3 of pyruvate and glyceraldehyde 3-phosphate to yield 1-deoxy-D-xylulose-5-phosphate (DXP). The protein is 1-deoxy-D-xylulose-5-phosphate synthase of Photobacterium profundum (strain SS9).